Reading from the N-terminus, the 183-residue chain is UPF0302 protein BH3876 (183 aa).

Belongs to the UPF0302 family.

The chain is UPF0302 protein BH3876 from Halalkalibacterium halodurans (strain ATCC BAA-125 / DSM 18197 / FERM 7344 / JCM 9153 / C-125) (Bacillus halodurans).